Here is a 216-residue protein sequence, read N- to C-terminus: Ribonuclease HII (216 aa).

The RNase H type-2 domain occupies 28–216; sequence DIVCGVDEAG…PVRAALDLIR (189 aa). Positions 34, 35, and 126 each coordinate a divalent metal cation.

This sequence belongs to the RNase HII family. Requires Mn(2+) as cofactor. Mg(2+) is required as a cofactor.

The protein resides in the cytoplasm. The catalysed reaction is Endonucleolytic cleavage to 5'-phosphomonoester.. Endonuclease that specifically degrades the RNA of RNA-DNA hybrids. This is Ribonuclease HII from Burkholderia vietnamiensis (strain G4 / LMG 22486) (Burkholderia cepacia (strain R1808)).